The primary structure comprises 272 residues: MVKTTEVVSEVSKVAGVRPWAGIFVVEIQEDILADEFTFEALMRTLPLASQARILNKKSFHDRCSNLCSQLLQLFGCSIVTGLNFQELKFDKGSFGKPFLDNNRFLPFSMTIGEQYVAMFLVKCVSTDEYQDVGIDIASPCNYGGREELELFKEVFSEREFNGLLKASDPCTIFTYLWSLKESYTKFTGTGLNTDLSLIDFGAISFFPAEGASMCITLDEVPLIFHSQWFNNEIVTICMPKSISDKINTNRPKLYNISLSTLIDYFIENDGL.

Belongs to the P-Pant transferase superfamily. AcpS family.

The enzyme catalyses apo-[ACP] + CoA = holo-[ACP] + adenosine 3',5'-bisphosphate + H(+). Functionally, catalyzes the transfer of a 4'-phosphopantetheine moiety from coenzyme A to a serine residue of acceptor proteins, such as alpha-aminoadipate reductase. Necessary for alpha-aminoadipate reductase activity. In Saccharomyces cerevisiae (strain ATCC 204508 / S288c) (Baker's yeast), this protein is L-aminoadipate-semialdehyde dehydrogenase-phosphopantetheinyl transferase.